The chain runs to 458 residues: Glycogen synthase (458 aa).

An ADP-alpha-D-glucose-binding site is contributed by K15.

The protein belongs to the glycosyltransferase 1 family. Bacterial/plant glycogen synthase subfamily.

The enzyme catalyses [(1-&gt;4)-alpha-D-glucosyl](n) + ADP-alpha-D-glucose = [(1-&gt;4)-alpha-D-glucosyl](n+1) + ADP + H(+). It participates in glycan biosynthesis; glycogen biosynthesis. In terms of biological role, synthesizes alpha-1,4-glucan chains using ADP-glucose. The chain is Glycogen synthase from Gloeobacter violaceus (strain ATCC 29082 / PCC 7421).